Reading from the N-terminus, the 587-residue chain is Kelch-like protein 3 (587 aa).

The tract at residues 1–24 (MEGESVKPSPQPTEQAGDGEKNRR) is disordered. The 68-residue stretch at 50-117 (CDVMIVAEDV…IYTAEIEVTE (68 aa)) folds into the BTB domain. The BACK domain maps to 152 to 254 (CLGIRAFADV…PRDYLVQTVE (103 aa)). Position 295 is a phosphothreonine (threonine 295). Kelch repeat units follow at residues 302–347 (VMIV…FMAG), 348–394 (HVYA…VLND), 396–441 (LYAV…VVEG), 442–490 (KLYA…VLSG), 491–537 (QLYA…AVNG), and 539–585 (LYVV…VSAS). Threonine 375 is subject to Phosphothreonine. 2 positions are modified to phosphoserine: serine 376 and serine 433.

The protein belongs to the KLHL3 family. In terms of assembly, homodimer. Component of the BCR(KLHL3) E3 ubiquitin ligase complex, at least composed of CUL3 and KLHL3 and RBX1. Interacts with CLDN8. Post-translationally, phosphorylation at Ser-433 by PKA or PKC decreases the interaction with WNK1 and WNK4, leading to inhibit their degradation by the BCR(KLHL3) complex. Phosphorylated at Ser-433 by PKC in response to angiotensin II signaling, decreasing ability to promote degradation of WNK1 and WNK4, leading to activation of Na-Cl cotransporter SLC12A3/NCC. Phosphorylation at Ser-433 is increased by insulin. Dephosphorylated at Ser-433 by calcineurin PPP3CA, promoting degradation of WNK1 and WNK4.

The protein localises to the cytoplasm. The protein resides in the cytoskeleton. Its subcellular location is the cytosol. Its pathway is protein modification; protein ubiquitination. Functionally, substrate-specific adapter of a BCR (BTB-CUL3-RBX1) E3 ubiquitin ligase complex that acts as a regulator of ion transport in the distal nephron. The BCR(KLHL3) complex acts by mediating ubiquitination and degradation of WNK1 and WNK4, two activators of Na-Cl cotransporter SLC12A3/NCC in distal convoluted tubule cells of kidney, thereby regulating NaCl reabsorption. The BCR(KLHL3) complex also mediates ubiquitination and degradation of WNK3. The BCR(KLHL3) complex also mediates ubiquitination of CLDN8, a tight-junction protein required for paracellular chloride transport in the kidney, leading to its degradation. The chain is Kelch-like protein 3 (Klhl3) from Rattus norvegicus (Rat).